Reading from the N-terminus, the 918-residue chain is DNA mismatch repair protein MutS (918 aa).

Gly-662 to Ser-669 serves as a coordination point for ATP.

This sequence belongs to the DNA mismatch repair MutS family.

Functionally, this protein is involved in the repair of mismatches in DNA. It is possible that it carries out the mismatch recognition step. This protein has a weak ATPase activity. In Sorangium cellulosum (strain So ce56) (Polyangium cellulosum (strain So ce56)), this protein is DNA mismatch repair protein MutS.